We begin with the raw amino-acid sequence, 356 residues long: Ion-translocating oxidoreductase complex subunit D (356 aa).

Transmembrane regions (helical) follow at residues 20–40 (LMLL…WFFG), 42–62 (GVLV…ALAI), 68–88 (PVGF…IGVS), and 117–137 (GFNP…SFPV). T177 carries the post-translational modification FMN phosphoryl threonine. Helical transmembrane passes span 205-225 (WASA…LYLL), 229-249 (VYTW…AALF), 259-279 (GSPL…FIVT), 292-312 (VIYG…GSSY), and 315-335 (GVAF…YYTT).

The protein belongs to the NqrB/RnfD family. As to quaternary structure, the complex is composed of six subunits: RnfA, RnfB, RnfC, RnfD, RnfE and RnfG. FMN serves as cofactor.

Its subcellular location is the cell inner membrane. In terms of biological role, part of a membrane-bound complex that couples electron transfer with translocation of ions across the membrane. The chain is Ion-translocating oxidoreductase complex subunit D from Cellvibrio japonicus (strain Ueda107) (Pseudomonas fluorescens subsp. cellulosa).